The primary structure comprises 304 residues: Oxygen-dependent coproporphyrinogen-III oxidase (304 aa).

Position 94 (Ser94) interacts with substrate. Positions 98 and 108 each coordinate a divalent metal cation. The active-site Proton donor is His108. 110–112 (NVR) serves as a coordination point for substrate. Positions 147 and 177 each coordinate a divalent metal cation. The tract at residues 242-277 (YVEFNLVWDRGTLFGLQSGGRTESVLMSMPPLARWQ) is important for dimerization. 260–262 (GGR) provides a ligand contact to substrate.

The protein belongs to the aerobic coproporphyrinogen-III oxidase family. In terms of assembly, homodimer. A divalent metal cation serves as cofactor.

Its subcellular location is the cytoplasm. The catalysed reaction is coproporphyrinogen III + O2 + 2 H(+) = protoporphyrinogen IX + 2 CO2 + 2 H2O. Its pathway is porphyrin-containing compound metabolism; protoporphyrin-IX biosynthesis; protoporphyrinogen-IX from coproporphyrinogen-III (O2 route): step 1/1. In terms of biological role, involved in the heme biosynthesis. Catalyzes the aerobic oxidative decarboxylation of propionate groups of rings A and B of coproporphyrinogen-III to yield the vinyl groups in protoporphyrinogen-IX. The protein is Oxygen-dependent coproporphyrinogen-III oxidase of Sodalis glossinidius (strain morsitans).